The chain runs to 430 residues: Cytochrome c biogenesis protein CcsB (430 aa).

A run of 3 helical transmembrane segments spans residues 14–34 (LRIA…GTAI), 72–92 (SSWF…CSWR), and 162–182 (AGPM…VWGS).

Belongs to the Ccs1/CcsB family. May interact with CcsA.

The protein localises to the cellular thylakoid membrane. Required during biogenesis of c-type cytochromes (cytochrome c6 and cytochrome f) at the step of heme attachment. This Prochlorococcus marinus (strain MIT 9313) protein is Cytochrome c biogenesis protein CcsB.